The following is a 722-amino-acid chain: A-type ATP synthase subunit I (722 aa).

Residues 309–321 (DYKPTGHDQHVPA) are compositionally biased toward basic and acidic residues. The interval 309-352 (DYKPTGHDQHVPADDGADAATDGGTTASFDETDSPPVIQDNPGP) is disordered. The segment covering 326-335 (DAATDGGTTA) has biased composition (low complexity). The next 8 membrane-spanning stretches (helical) occupy residues 384 to 404 (FYGF…LGFW), 419 to 439 (GVAM…GEVF), 474 to 494 (LAAS…FGFV), 505 to 525 (AALE…WLFS), 554 to 574 (LAAA…AGFL), 590 to 610 (IAAV…LVFG), 639 to 659 (FMLF…MHMG), and 662 to 682 (GILI…ALGV).

Belongs to the V-ATPase 116 kDa subunit family. As to quaternary structure, has multiple subunits with at least A(3), B(3), C, D, E, F, H, I and proteolipid K(x).

The protein resides in the cell membrane. Functionally, component of the A-type ATP synthase that produces ATP from ADP in the presence of a proton gradient across the membrane. The polypeptide is A-type ATP synthase subunit I (Halobacterium salinarum (strain ATCC 700922 / JCM 11081 / NRC-1) (Halobacterium halobium)).